Reading from the N-terminus, the 291-residue chain is 33 kDa chaperonin (291 aa).

2 cysteine pairs are disulfide-bonded: Cys237-Cys239 and Cys270-Cys273.

Belongs to the HSP33 family. Post-translationally, under oxidizing conditions two disulfide bonds are formed involving the reactive cysteines. Under reducing conditions zinc is bound to the reactive cysteines and the protein is inactive.

It is found in the cytoplasm. Its function is as follows. Redox regulated molecular chaperone. Protects both thermally unfolding and oxidatively damaged proteins from irreversible aggregation. Plays an important role in the bacterial defense system toward oxidative stress. The sequence is that of 33 kDa chaperonin from Bacillus cereus (strain B4264).